Consider the following 367-residue polypeptide: MSDFGHTGFSIDDLPLRDDLRGQAPYGAPQLTVKAVLNTNENPYPPSPELVEAIGRAAAEAAVGLNRYPDREATALRQALADYLGHGVDAANVWAANGSNEILQQILQAFGGPGHKALGFEPSYSMHPIIARGTATEWVSVPRTADFDVDADAAVAAVKEHEPSVVFLTSPNNPTGTALPLATVEAIAAAAPGVVVVDEAYAEFRREGTPSALSLLRTYPNVIVSRTMSKAFAMAGVRLGYLAAHPAVVDALQLVRLPYHLSTVTQAVALTALRYADELLSAVATLRAERDALVDWLRAHGFEVADSDANFVLFGRFPDRSAVFQHLLDQGVLIREVGPPEWLRVTVGTPEEMAIFREALLTATGRA.

The residue at position 230 (Lys230) is an N6-(pyridoxal phosphate)lysine.

The protein belongs to the class-II pyridoxal-phosphate-dependent aminotransferase family. Histidinol-phosphate aminotransferase subfamily. In terms of assembly, homodimer. It depends on pyridoxal 5'-phosphate as a cofactor.

The catalysed reaction is L-histidinol phosphate + 2-oxoglutarate = 3-(imidazol-4-yl)-2-oxopropyl phosphate + L-glutamate. The protein operates within amino-acid biosynthesis; L-histidine biosynthesis; L-histidine from 5-phospho-alpha-D-ribose 1-diphosphate: step 7/9. In Thermobifida fusca (strain YX), this protein is Histidinol-phosphate aminotransferase.